The primary structure comprises 185 residues: Gastrokine-1 (185 aa).

The N-terminal stretch at 1-20 (MKFTIVFAGLLGVFLAPALA) is a signal peptide. The 97-residue stretch at 54 to 150 (NNGWDSWNSI…MCRGIPTYMA (97 aa)) folds into the BRICHOS domain. A disulfide bridge links Cys-81 with Cys-142.

The protein belongs to the gastrokine family. In terms of tissue distribution, expressed in stomach (at protein level). No expression is detected in cancer tissue or gastric cancer cell lines.

It is found in the secreted. The protein resides in the cytoplasmic granule. Its subcellular location is the golgi apparatus. Has mitogenic activity and may be involved in maintaining the integrity of the gastric mucosal epithelium. The protein is Gastrokine-1 (GKN1) of Homo sapiens (Human).